The chain runs to 960 residues: Gamma-aminobutyric acid type B receptor subunit 1 (960 aa).

The first 19 residues, 1–19 (MLLLLLVPLFLRPLGAGGA), serve as a signal peptide directing secretion. Over 20 to 590 (QTPNVTSEGC…KTFRFLSQKL (571 aa)) the chain is Extracellular. Asn23 and Asn83 each carry an N-linked (GlcNAc...) asparagine glycan. Sushi domains follow at residues 29–95 (CQII…PSRC) and 97–158 (RICS…HCQV). Cystine bridges form between Cys99–Cys144, Cys130–Cys156, and Cys219–Cys245. Positions 246, 269, 286, and 366 each coordinate 4-aminobutanoate. Cys375 and Cys409 are disulfide-bonded. 2 N-linked (GlcNAc...) asparagine glycosylation sites follow: Asn408 and Asn439. Glu465 serves as a coordination point for 4-aminobutanoate. Asn481, Asn501, and Asn513 each carry an N-linked (GlcNAc...) asparagine glycan. The helical transmembrane segment at 591–611 (FISVSVLSSLGIVLAVVCLSF) threads the bilayer. At 612 to 630 (NIYNSHVRYIQNSQPNLNN) the chain is on the cytoplasmic side. Residues 631–651 (LTAVGCSLALAAVFPLGLDGY) form a helical membrane-spanning segment. The Extracellular portion of the chain corresponds to 652–666 (HIGRSQFPFVCQARL). Residues 667–687 (WLLGLGFSLGYGSMFTKIWWV) traverse the membrane as a helical segment. At 688–709 (HTVFTKKEEKKEWRKTLEPWKL) the chain is on the cytoplasmic side. The chain crosses the membrane as a helical span at residues 710-730 (YATVGLLVGMDILTLAIWQIV). The Extracellular portion of the chain corresponds to 731 to 767 (DPLHRTIETFAKEEPKEDIDVSILPQLEHCSSKKMNT). Residues 768 to 788 (WLGIFYGYKGLLLLLGIFLAY) form a helical membrane-spanning segment. The Cytoplasmic portion of the chain corresponds to 789–803 (ETKSVSTEKINDHRA). The chain crosses the membrane as a helical span at residues 804-824 (VGMAIYNVAVLCLITAPVTMI). Residues 825–832 (LSSQQDAA) are Extracellular-facing. The helical transmembrane segment at 833–853 (FAFASLAIVFSSYITLVVLFV) threads the bilayer. Residues 854–960 (PKMRRLITRG…DGSRVHLLYK (107 aa)) lie on the Cytoplasmic side of the membrane. Disordered stretches follow at residues 866-891 (QSEAQDTMKTGSSTNNNEEEKSRLLE) and 908-960 (VSEL…LLYK). Residues 867 to 879 (SEAQDTMKTGSST) show a composition bias toward polar residues. Positions 868–924 (EAQDTMKTGSSTNNNEEEKSRLLEKENRELEKIIAEKEERVSELRHQLQSRQQIRSR) form a coiled coil. At Thr872 the chain carries Phosphothreonine. The tract at residues 887–915 (SRLLEKENRELEKIIAEKEERVSELRHQL) is interaction with ATF4. Phosphothreonine is present on Thr929.

Belongs to the G-protein coupled receptor 3 family. GABA-B receptor subfamily. In terms of assembly, heterodimer of GABBR1 and GABBR2. Homodimers may form, but are inactive. Interacts (via C-terminus) with ATF4 (via leucine zipper domain). Interacts with JAKMIP1. Interacts with KCTD8, KCTD12, KCTD12B and KCTD16; this interaction determines the pharmacology and kinetics of the receptor response, the KCTD proteins markedly accelerating the GABA-B response, although to different extents. As to expression, expressed in neuronal tissue including cortex, cerebellum and spinal cord. Not detected in non-neuronal tissues including heart, liver, spleen and kidney.

The protein resides in the cell membrane. Its subcellular location is the postsynaptic cell membrane. It localises to the cell projection. It is found in the dendrite. Component of a heterodimeric G-protein coupled receptor for GABA, formed by GABBR1 and GABBR2. Within the heterodimeric GABA receptor, only GABBR1 seems to bind agonists, while GABBR2 mediates coupling to G proteins. Ligand binding causes a conformation change that triggers signaling via guanine nucleotide-binding proteins (G proteins) and modulates the activity of down-stream effectors, such as adenylate cyclase. Signaling inhibits adenylate cyclase, stimulates phospholipase A2, activates potassium channels, inactivates voltage-dependent calcium-channels and modulates inositol phospholipid hydrolysis. Calcium is required for high affinity binding to GABA. Plays a critical role in the fine-tuning of inhibitory synaptic transmission. Pre-synaptic GABA receptor inhibits neurotransmitter release by down-regulating high-voltage activated calcium channels, whereas postsynaptic GABA receptor decreases neuronal excitability by activating a prominent inwardly rectifying potassium (Kir) conductance that underlies the late inhibitory postsynaptic potentials. Not only implicated in synaptic inhibition but also in hippocampal long-term potentiation, slow wave sleep, muscle relaxation and antinociception. The protein is Gamma-aminobutyric acid type B receptor subunit 1 (Gabbr1) of Mus musculus (Mouse).